Reading from the N-terminus, the 60-residue chain is Large ribosomal subunit protein uL30 (60 aa).

It belongs to the universal ribosomal protein uL30 family. As to quaternary structure, part of the 50S ribosomal subunit.

This is Large ribosomal subunit protein uL30 from Bacillus pumilus (strain SAFR-032).